The chain runs to 142 residues: Large ribosomal subunit protein uL13 (142 aa).

This sequence belongs to the universal ribosomal protein uL13 family. Part of the 50S ribosomal subunit.

This protein is one of the early assembly proteins of the 50S ribosomal subunit, although it is not seen to bind rRNA by itself. It is important during the early stages of 50S assembly. This Ruthia magnifica subsp. Calyptogena magnifica protein is Large ribosomal subunit protein uL13.